A 712-amino-acid chain; its full sequence is Polyribonucleotide nucleotidyltransferase (712 aa).

Residues Asp487 and Asp493 each contribute to the Mg(2+) site. Residues 554–613 (PRIEVMNIPVDKIREVIGSGGKVIREIVEKTGAKINIEDDGTVKIASSSGKEIEAARKWI) form the KH domain. An S1 motif domain is found at 623–691 (GQIYEGTVVK…ERGKVRLSMK (69 aa)).

The protein belongs to the polyribonucleotide nucleotidyltransferase family. It depends on Mg(2+) as a cofactor.

It localises to the cytoplasm. It carries out the reaction RNA(n+1) + phosphate = RNA(n) + a ribonucleoside 5'-diphosphate. Its function is as follows. Involved in mRNA degradation. Catalyzes the phosphorolysis of single-stranded polyribonucleotides processively in the 3'- to 5'-direction. The chain is Polyribonucleotide nucleotidyltransferase from Rhizobium etli (strain ATCC 51251 / DSM 11541 / JCM 21823 / NBRC 15573 / CFN 42).